Here is a 204-residue protein sequence, read N- to C-terminus: Superoxide dismutase [Mn] (204 aa).

Mn(2+) is bound at residue H27. Residues T34 and T70 each carry the phosphothreonine modification. Mn(2+) is bound by residues H82, D164, and H168.

The protein belongs to the iron/manganese superoxide dismutase family. Homodimer. Requires Mn(2+) as cofactor.

It carries out the reaction 2 superoxide + 2 H(+) = H2O2 + O2. Functionally, destroys superoxide anion radicals which are normally produced within the cells and which are toxic to biological systems. This Bacillus caldotenax protein is Superoxide dismutase [Mn] (sodA).